The chain runs to 398 residues: Delta-aminolevulinic acid dehydratase, chloroplastic (398 aa).

The tract at residues 48-87 (VPEAPPVPPTPASPAGTPVVPSLPIQRRPRRNRRSPALRS) is disordered. Residues 50 to 59 (EAPPVPPTPA) are compositionally biased toward pro residues. The segment covering 60-69 (SPAGTPVVPS) has biased composition (low complexity). The span at 74–83 (RRPRRNRRSP) shows a compositional bias: basic residues. The active-site Schiff-base intermediate with substrate is the K266. The 5-aminolevulinate site is built by R276 and K288. E304 is a Mg(2+) binding site. The Schiff-base intermediate with substrate role is filled by K319. 5-aminolevulinate is bound by residues S345 and Y384.

Belongs to the ALAD family. Homooctamer; formed by oligomerization of dimers. Probably also forms lower oligomers. It depends on Mg(2+) as a cofactor.

It localises to the plastid. It is found in the chloroplast. It carries out the reaction 2 5-aminolevulinate = porphobilinogen + 2 H2O + H(+). The protein operates within porphyrin-containing compound metabolism; protoporphyrin-IX biosynthesis; coproporphyrinogen-III from 5-aminolevulinate: step 1/4. With respect to regulation, activated by magnesium. Inhibited by succinyl acetone. Enzyme activity may depend on the oligomerization state, where the fully active octamer may dissociate and reassemble into less active lower oligomers. Its function is as follows. Catalyzes an early step in the biosynthesis of tetrapyrroles. Binds two molecules of 5-aminolevulinate per subunit, each at a distinct site, and catalyzes their condensation to form porphobilinogen. This is Delta-aminolevulinic acid dehydratase, chloroplastic (HEMB) from Pisum sativum (Garden pea).